Reading from the N-terminus, the 177-residue chain is MSRVAKNPVILPAGVEAKFTAAEIVVKGPLGQLAMPLNAGVEVRLEDNALKFAAKDESKASRSMSGTMRALVNNMVTGVSKGFERKLQLVGVGYRAQAQGAALNLTLGFSHPVVHPMPEGVAVETPSQTEIILKGVDKQKVGQVAAEIRAYRAPEPYKGKGVRYAGEQVVLKETKKK.

This sequence belongs to the universal ribosomal protein uL6 family. In terms of assembly, part of the 50S ribosomal subunit.

Its function is as follows. This protein binds to the 23S rRNA, and is important in its secondary structure. It is located near the subunit interface in the base of the L7/L12 stalk, and near the tRNA binding site of the peptidyltransferase center. This chain is Large ribosomal subunit protein uL6, found in Laribacter hongkongensis (strain HLHK9).